We begin with the raw amino-acid sequence, 633 residues long: Mini-chromosome maintenance complex-binding protein (633 aa).

The tract at residues 154–198 is disordered; it reads PSTSYTPSRHKRSYEEDEDMEQHPSKQKEQHMGSGGDSHGCGEPK. Residues 174 to 184 show a composition bias toward basic and acidic residues; it reads EQHPSKQKEQH.

The protein belongs to the MCMBP family. As to quaternary structure, interacts with the MCM complex: associates with the MCM3-7 complex which lacks MCM2, while it does not interact with the MCM complex when MCM2 is present (MCM2-7 complex).

The protein resides in the nucleus. In terms of biological role, associated component of the MCM complex that acts as a regulator of DNA replication. Binds to the MCM complex during late S phase and promotes the disassembly of the MCM complex from chromatin, thereby acting as a key regulator of pre-replication complex (pre-RC) unloading from replicated DNA. Can dissociate the MCM complex without addition of ATP; probably acts by destabilizing interactions of each individual subunits of the MCM complex. Required for sister chromatid cohesion. The protein is Mini-chromosome maintenance complex-binding protein (MCMBP) of Gallus gallus (Chicken).